A 488-amino-acid polypeptide reads, in one-letter code: Malonate-semialdehyde dehydrogenase (488 aa).

NAD(+) contacts are provided by Ala-150, Phe-152, Lys-176, Glu-179, Arg-180, Ser-229, and Thr-251. Cys-284 serves as the catalytic Nucleophile. Glu-382 is an NAD(+) binding site.

This sequence belongs to the aldehyde dehydrogenase family. IolA subfamily. Homotetramer.

It catalyses the reaction 3-oxopropanoate + NAD(+) + CoA + H2O = hydrogencarbonate + acetyl-CoA + NADH + H(+). The enzyme catalyses 2-methyl-3-oxopropanoate + NAD(+) + CoA + H2O = propanoyl-CoA + hydrogencarbonate + NADH + H(+). The protein operates within polyol metabolism; myo-inositol degradation into acetyl-CoA; acetyl-CoA from myo-inositol: step 7/7. In terms of biological role, catalyzes the oxidation of malonate semialdehyde (MSA) and methylmalonate semialdehyde (MMSA) into acetyl-CoA and propanoyl-CoA, respectively. Is involved in a myo-inositol catabolic pathway. Bicarbonate, and not CO2, is the end-product of the enzymatic reaction. This is Malonate-semialdehyde dehydrogenase from Listeria monocytogenes serotype 4b (strain F2365).